We begin with the raw amino-acid sequence, 429 residues long: Adenylosuccinate synthetase (429 aa).

Residues 12-18 and 40-42 contribute to the GTP site; these read GDEGKGK and GHT. The active-site Proton acceptor is the Asp-13. Mg(2+) is bound by residues Asp-13 and Gly-40. Residues 13 to 16, 38 to 41, Thr-128, Arg-142, Gln-223, Thr-238, and Arg-302 each bind IMP; these read DEGK and NAGH. His-41 acts as the Proton donor in catalysis. Substrate is bound at residue 298–304; it reads TVTKRPR. GTP contacts are provided by residues Arg-304, 330–332, and 412–414; these read CLD and SVG.

Belongs to the adenylosuccinate synthetase family. Homodimer. Mg(2+) is required as a cofactor.

The protein localises to the cytoplasm. It carries out the reaction IMP + L-aspartate + GTP = N(6)-(1,2-dicarboxyethyl)-AMP + GDP + phosphate + 2 H(+). The protein operates within purine metabolism; AMP biosynthesis via de novo pathway; AMP from IMP: step 1/2. Functionally, plays an important role in the de novo pathway of purine nucleotide biosynthesis. Catalyzes the first committed step in the biosynthesis of AMP from IMP. The chain is Adenylosuccinate synthetase from Lactiplantibacillus plantarum (strain ATCC BAA-793 / NCIMB 8826 / WCFS1) (Lactobacillus plantarum).